A 24-amino-acid polypeptide reads, in one-letter code: Acetylcholine receptor subunit alpha (24 aa).

Belongs to the ligand-gated ion channel (TC 1.A.9) family. Acetylcholine receptor (TC 1.A.9.1) subfamily. Alpha-1/CHRNA1 sub-subfamily. One of the alpha chains that assemble within the acetylcholine receptor, a pentamer of two alpha chains, a beta, a delta, and a gamma or epsilon chains.

The protein localises to the postsynaptic cell membrane. The protein resides in the cell membrane. The catalysed reaction is K(+)(in) = K(+)(out). It catalyses the reaction Na(+)(in) = Na(+)(out). Upon acetylcholine binding, the AChR responds by an extensive change in conformation that affects all subunits and leads to opening of an ion-conducting channel across the plasma membrane. The protein is Acetylcholine receptor subunit alpha (chrna1) of Electrophorus electricus (Electric eel).